The primary structure comprises 887 residues: Probable dual specificity protein kinase madd-3 (887 aa).

Disordered stretches follow at residues Pro77–Ala147, Ala163–Leu299, Leu313–Gly333, Thr347–Ala475, and Arg504–Asp533. The segment covering Pro108 to Pro118 has biased composition (low complexity). Over residues Val121–Ser130 the composition is skewed to basic and acidic residues. Residues Ser177–Gly192 show a composition bias toward polar residues. Over residues Ser217–Ala241 the composition is skewed to low complexity. Composition is skewed to polar residues over residues Pro314–Gly332 and Asn356–Gly366. Basic and acidic residues predominate over residues Asp367–Leu377. Residues Leu407–Asn419 show a composition bias toward low complexity. Residues Phe439 to Glu462 show a composition bias toward polar residues. The 313-residue stretch at Phe551–Phe863 folds into the Protein kinase domain. Residues Leu557–Val565 and Lys580 each bind ATP. The active-site Proton acceptor is Asp677.

It belongs to the protein kinase superfamily. CMGC Ser/Thr protein kinase family. Lammer subfamily. In terms of tissue distribution, expressed in body wall, vulval and anal depressor muscles.

Its subcellular location is the cytoplasm. It localises to the nucleus. In terms of biological role, probable dual specificity kinase acting on both serine/threonine and tyrosine-containing substrates. Negatively regulates p38 MAPK signaling to allow for the plasma membrane of body wall muscle cells to form projections, also called muscle arms, that extend and connect the body wall muscles to target motor neurons. Negative regulation of p38 MAPK signaling may in turn modulate the trafficking of the muscle specific receptor eva-1 to the lysosome, to ensure proper display of the eva-1 receptor on the plasma membrane of muscle cells and allow for muscle arm extension towards guidance cues. This is Probable dual specificity protein kinase madd-3 from Caenorhabditis elegans.